Consider the following 92-residue polypeptide: Small ribosomal subunit protein uS19 (92 aa).

It belongs to the universal ribosomal protein uS19 family.

Functionally, protein S19 forms a complex with S13 that binds strongly to the 16S ribosomal RNA. This chain is Small ribosomal subunit protein uS19, found in Rhizobium johnstonii (strain DSM 114642 / LMG 32736 / 3841) (Rhizobium leguminosarum bv. viciae).